The sequence spans 406 residues: 26S proteasome regulatory subunit 8 (406 aa).

Position 2 is an N-acetylalanine (Ala-2). At Ser-120 the chain carries Phosphoserine. Residues 186-406 (VLLYGPPGTG…KNMSIKKLWK (221 aa)) form a may mediate interaction with PRPF9 region. 190–197 (GPPGTGKT) provides a ligand contact to ATP. N6-acetyllysine is present on Lys-222.

The protein belongs to the AAA ATPase family. As to quaternary structure, component of the 19S proteasome regulatory particle complex. The 26S proteasome consists of a 20S core particle (CP) and two 19S regulatory subunits (RP). The regulatory particle is made of a lid composed of 9 subunits, a base containing 6 ATPases including PSMC5 and few additional components. Component of a complex with USP49 and RUVBL1. Interacts with PRPF19. Interacts with TRIM5. Interacts with NDC80. Interacts with PAAF1. Interacts, in vitro, with the thyroid hormone receptor (in a thyroid hormone T3-dependent manner) and with retinoid X receptor (RXR). Interacts with ERCC6.

It localises to the cytoplasm. The protein localises to the nucleus. In terms of biological role, component of the 26S proteasome, a multiprotein complex involved in the ATP-dependent degradation of ubiquitinated proteins. This complex plays a key role in the maintenance of protein homeostasis by removing misfolded or damaged proteins, which could impair cellular functions, and by removing proteins whose functions are no longer required. Therefore, the proteasome participates in numerous cellular processes, including cell cycle progression, apoptosis, or DNA damage repair. PSMC5 belongs to the heterohexameric ring of AAA (ATPases associated with diverse cellular activities) proteins that unfolds ubiquitinated target proteins that are concurrently translocated into a proteolytic chamber and degraded into peptides. The sequence is that of 26S proteasome regulatory subunit 8 (PSMC5) from Bos taurus (Bovine).